Reading from the N-terminus, the 396-residue chain is Ribosomal RNA large subunit methyltransferase I (396 aa).

The region spanning 2–79 (AVRIKLKPGR…REEEIDREFF (78 aa)) is the PUA domain.

Belongs to the methyltransferase superfamily. RlmI family.

It is found in the cytoplasm. It carries out the reaction cytidine(1962) in 23S rRNA + S-adenosyl-L-methionine = 5-methylcytidine(1962) in 23S rRNA + S-adenosyl-L-homocysteine + H(+). Specifically methylates the cytosine at position 1962 (m5C1962) of 23S rRNA. The sequence is that of Ribosomal RNA large subunit methyltransferase I from Shewanella sp. (strain MR-7).